Reading from the N-terminus, the 221-residue chain is uncharacterized protein (221 aa).

A DNA-binding region (H-T-H motif) is located at residues 77-96 (YRERAVELGVPERAILVEPN).

It to E.coli YdcF.

Functionally, the imp locus inhibits the extrachromosomal maintenance of the streptomyces plasmid SLP1. May function as a transcriptional activator. This is an uncharacterized protein from Streptomyces coelicolor (strain ATCC BAA-471 / A3(2) / M145).